The chain runs to 465 residues: Ribulose bisphosphate carboxylase large chain (465 aa).

Residue K4 is modified to N6,N6,N6-trimethyllysine. Substrate-binding residues include N113 and T163. K165 functions as the Proton acceptor in the catalytic mechanism. K167 provides a ligand contact to substrate. Residues K191, D193, and E194 each contribute to the Mg(2+) site. K191 is modified (N6-carboxylysine). Catalysis depends on H284, which acts as the Proton acceptor. 3 residues coordinate substrate: R285, H317, and S369.

The protein belongs to the RuBisCO large chain family. Type I subfamily. Heterohexadecamer of 8 large chains and 8 small chains; disulfide-linked. The disulfide link is formed within the large subunit homodimers. Mg(2+) serves as cofactor. In terms of processing, the disulfide bond which can form in the large chain dimeric partners within the hexadecamer appears to be associated with oxidative stress and protein turnover.

The protein resides in the plastid. It localises to the chloroplast. The enzyme catalyses 2 (2R)-3-phosphoglycerate + 2 H(+) = D-ribulose 1,5-bisphosphate + CO2 + H2O. It catalyses the reaction D-ribulose 1,5-bisphosphate + O2 = 2-phosphoglycolate + (2R)-3-phosphoglycerate + 2 H(+). Functionally, ruBisCO catalyzes two reactions: the carboxylation of D-ribulose 1,5-bisphosphate, the primary event in carbon dioxide fixation, as well as the oxidative fragmentation of the pentose substrate in the photorespiration process. Both reactions occur simultaneously and in competition at the same active site. In Cyrilla racemiflora (Swamp titi), this protein is Ribulose bisphosphate carboxylase large chain.